Consider the following 141-residue polypeptide: Galactose-6-phosphate isomerase subunit LacA 1 (141 aa).

It belongs to the LacAB/RpiB family. As to quaternary structure, heteromultimeric protein consisting of LacA and LacB.

The catalysed reaction is aldehydo-D-galactose 6-phosphate = keto-D-tagatose 6-phosphate. It participates in carbohydrate metabolism; D-galactose 6-phosphate degradation; D-tagatose 6-phosphate from D-galactose 6-phosphate: step 1/1. The polypeptide is Galactose-6-phosphate isomerase subunit LacA 1 (Streptococcus agalactiae serotype III (strain NEM316)).